A 327-amino-acid chain; its full sequence is MKIAVDVMGGDRAPDEILKGALLASKELESEIVLVGPREIVENAGLSFVETTEVVNMDDPPLEVLRKKDSSMHVGLKLVAEGKVDAFVSAGATGPLFLGATSIVGKIKGVERPALGVAVPSLKGFTVLIDAGANAKVRPEHLLDFSLMGIAYARVLGVESPRVGLLNIGSEENKGHEDLRKAFSLLKEHLGDNFYGNVEGHDINLGTVHVVVTDGFSGNVALKTMEGTAKLITSVMKESIKEGGLFSLIGAFLMKKSFDRMRERLDPRTYGGTFILGIRGIVVKAHGSSDAKAIRHAIRVAERGIRMNLVREIERGIPHVRNSGDGR.

Belongs to the PlsX family. As to quaternary structure, homodimer. Probably interacts with PlsY.

The protein localises to the cytoplasm. It catalyses the reaction a fatty acyl-[ACP] + phosphate = an acyl phosphate + holo-[ACP]. It participates in lipid metabolism; phospholipid metabolism. Catalyzes the reversible formation of acyl-phosphate (acyl-PO(4)) from acyl-[acyl-carrier-protein] (acyl-ACP). This enzyme utilizes acyl-ACP as fatty acyl donor, but not acyl-CoA. The chain is Phosphate acyltransferase from Thermotoga neapolitana (strain ATCC 49049 / DSM 4359 / NBRC 107923 / NS-E).